A 907-amino-acid chain; its full sequence is Protein translocase subunit SecA (907 aa).

ATP-binding positions include Gln-87, Gly-105–Thr-109, and Asp-511. Positions 891, 893, 902, and 903 each coordinate Zn(2+).

Belongs to the SecA family. As to quaternary structure, monomer and homodimer. Part of the essential Sec protein translocation apparatus which comprises SecA, SecYEG and auxiliary proteins SecDF-YajC and YidC. Zn(2+) serves as cofactor.

It is found in the cell inner membrane. The protein resides in the cytoplasm. The enzyme catalyses ATP + H2O + cellular proteinSide 1 = ADP + phosphate + cellular proteinSide 2.. Its function is as follows. Part of the Sec protein translocase complex. Interacts with the SecYEG preprotein conducting channel. Has a central role in coupling the hydrolysis of ATP to the transfer of proteins into and across the cell membrane, serving both as a receptor for the preprotein-SecB complex and as an ATP-driven molecular motor driving the stepwise translocation of polypeptide chains across the membrane. The polypeptide is Protein translocase subunit SecA (Aromatoleum aromaticum (strain DSM 19018 / LMG 30748 / EbN1) (Azoarcus sp. (strain EbN1))).